The sequence spans 123 residues: UPF0426 protein At1g28150, chloroplastic (123 aa).

Residues 1-26 constitute a chloroplast transit peptide; sequence MGFVLICTCPPSSGVVVSQLHHHQFS. Positions 97 to 123 are disordered; that stretch reads SGITEEEVDADGVVSNDEDSPQQIEIE. Residues 100 to 123 are compositionally biased toward acidic residues; sequence TEEEVDADGVVSNDEDSPQQIEIE.

It belongs to the UPF0426 family.

The protein resides in the plastid. The protein localises to the chloroplast. It localises to the plastoglobule. This chain is UPF0426 protein At1g28150, chloroplastic, found in Arabidopsis thaliana (Mouse-ear cress).